A 204-amino-acid polypeptide reads, in one-letter code: dITP/XTP pyrophosphatase (204 aa).

8–13 contacts substrate; sequence SNNAKK. Glutamate 43 and aspartate 72 together coordinate Mg(2+). Catalysis depends on aspartate 72, which acts as the Proton acceptor. Substrate contacts are provided by residues serine 73, 155 to 158, lysine 180, and 185 to 186; these read FGYD and HR.

This sequence belongs to the HAM1 NTPase family. As to quaternary structure, homodimer. Mg(2+) is required as a cofactor.

The catalysed reaction is XTP + H2O = XMP + diphosphate + H(+). It carries out the reaction dITP + H2O = dIMP + diphosphate + H(+). The enzyme catalyses ITP + H2O = IMP + diphosphate + H(+). In terms of biological role, pyrophosphatase that catalyzes the hydrolysis of nucleoside triphosphates to their monophosphate derivatives, with a high preference for the non-canonical purine nucleotides XTP (xanthosine triphosphate), dITP (deoxyinosine triphosphate) and ITP. Seems to function as a house-cleaning enzyme that removes non-canonical purine nucleotides from the nucleotide pool, thus preventing their incorporation into DNA/RNA and avoiding chromosomal lesions. The protein is dITP/XTP pyrophosphatase of Cutibacterium acnes (strain DSM 16379 / KPA171202) (Propionibacterium acnes).